A 337-amino-acid polypeptide reads, in one-letter code: Alcohol dehydrogenase 1 (337 aa).

7 residues coordinate Zn(2+): cysteine 37, histidine 58, cysteine 89, cysteine 92, cysteine 95, cysteine 103, and cysteine 145.

This sequence belongs to the zinc-containing alcohol dehydrogenase family. As to quaternary structure, multimeric (with different ratios of monomers). It depends on Zn(2+) as a cofactor.

The catalysed reaction is a primary alcohol + NAD(+) = an aldehyde + NADH + H(+). The enzyme catalyses a secondary alcohol + NAD(+) = a ketone + NADH + H(+). Its pathway is alcohol metabolism; ethanol biosynthesis via fermentation pathway. Inhibited by ethanol. This Zymomonas mobilis subsp. mobilis (strain ATCC 31821 / ZM4 / CP4) protein is Alcohol dehydrogenase 1 (adhA).